Here is a 590-residue protein sequence, read N- to C-terminus: UvrABC system protein C (590 aa).

Positions 14-91 (DQPGCYLMKD…IKKHDPKYNV (78 aa)) constitute a GIY-YIG domain. The UVR domain maps to 196 to 231 (NEVKKELEEKMHEAAENLEFERAKELRDQIAHIEST).

This sequence belongs to the UvrC family. Interacts with UvrB in an incision complex.

The protein localises to the cytoplasm. Its function is as follows. The UvrABC repair system catalyzes the recognition and processing of DNA lesions. UvrC both incises the 5' and 3' sides of the lesion. The N-terminal half is responsible for the 3' incision and the C-terminal half is responsible for the 5' incision. The sequence is that of UvrABC system protein C from Bacillus subtilis (strain 168).